The following is a 200-amino-acid chain: Lipopolysaccharide core heptose(II)-phosphate phosphatase (200 aa).

The first 25 residues, 1–25 (MLAFCRSSLKSKKYFIILLALAAIA), serve as a signal peptide directing secretion.

It belongs to the phosphoglycerate mutase family. Ais subfamily.

The protein resides in the periplasm. It participates in bacterial outer membrane biogenesis; lipopolysaccharide metabolism. Functionally, catalyzes the dephosphorylation of heptose(II) of the outer membrane lipopolysaccharide core. The protein is Lipopolysaccharide core heptose(II)-phosphate phosphatase of Escherichia coli O7:K1 (strain IAI39 / ExPEC).